The sequence spans 216 residues: MRDQFISLALILCVLHSACGLYFHISETERKCFIEEVPDETTVIVNYKVELYDPRSNGFMPSSPGIGMHVEVRDSDDKIVLSRVYSSQGRISFTSHTPGEHVICMFSNSTAWFSGAQLRVHLDIQVGEHAIDYANVAQKEKLTELQLRIRQLLDQVEQITKEQNYQRYREERFRHTSESTNSRVLWWSLAQTVVLVCMGFWQMRHLKSFFEAKKLV.

The first 20 residues, Met1–Gly20, serve as a signal peptide directing secretion. Over Leu21–Ser182 the chain is Lumenal. In terms of domain architecture, GOLD spans Arg30–Val126. Residues Ala134 to Asn164 adopt a coiled-coil conformation. A helical transmembrane segment spans residues Arg183–Met203. At Arg204–Val216 the chain is on the cytoplasmic side. The Prevents secretion from ER signature appears at Lys213 to Val216.

It belongs to the EMP24/GP25L family.

It localises to the endoplasmic reticulum membrane. Functionally, eca and bai are essential, though not redundant, for dorsoventral patterning of the embryo. Specifically required during early embryogenesis for the activity of maternal tkv, while the zygotic tkv is not affected. Involved in Golgi organization. The protein is Transmembrane emp24 domain-containing protein eca of Drosophila simulans (Fruit fly).